We begin with the raw amino-acid sequence, 436 residues long: uncharacterized protein (436 aa).

The first 18 residues, 1 to 18, serve as a signal peptide directing secretion; that stretch reads MMKRFVALSMAIFSLSFA.

This is an uncharacterized protein from Aquifex aeolicus (strain VF5).